Consider the following 374-residue polypeptide: 2-aminoethylphosphonate--pyruvate transaminase 1 (374 aa).

Residue lysine 195 is modified to N6-(pyridoxal phosphate)lysine.

It belongs to the class-V pyridoxal-phosphate-dependent aminotransferase family. PhnW subfamily. Homodimer. It depends on pyridoxal 5'-phosphate as a cofactor.

It carries out the reaction (2-aminoethyl)phosphonate + pyruvate = phosphonoacetaldehyde + L-alanine. In terms of biological role, involved in phosphonate degradation. The protein is 2-aminoethylphosphonate--pyruvate transaminase 1 of Polaromonas sp. (strain JS666 / ATCC BAA-500).